Consider the following 454-residue polypeptide: tRNA modification GTPase MnmE (454 aa).

Residues R23, E80, and K120 each coordinate (6S)-5-formyl-5,6,7,8-tetrahydrofolate. The 162-residue stretch at 216-377 folds into the TrmE-type G domain; it reads GMKVVIAGRP…LRSHLKEAMG (162 aa). N226 is a binding site for K(+). Residues 226–231, 245–251, 270–273, and 358–360 contribute to the GTP site; these read NAGKSS, TDIAGTT, DTAG, and SAR. Position 230 (S230) interacts with Mg(2+). The K(+) site is built by T245, I247, and T250. Mg(2+) is bound at residue T251. K454 contributes to the (6S)-5-formyl-5,6,7,8-tetrahydrofolate binding site.

The protein belongs to the TRAFAC class TrmE-Era-EngA-EngB-Septin-like GTPase superfamily. TrmE GTPase family. In terms of assembly, homodimer. Heterotetramer of two MnmE and two MnmG subunits. K(+) is required as a cofactor.

It is found in the cytoplasm. In terms of biological role, exhibits a very high intrinsic GTPase hydrolysis rate. Involved in the addition of a carboxymethylaminomethyl (cmnm) group at the wobble position (U34) of certain tRNAs, forming tRNA-cmnm(5)s(2)U34. This Proteus mirabilis (strain HI4320) protein is tRNA modification GTPase MnmE.